Consider the following 59-residue polypeptide: Anti-inflammatory peptide amregulin (59 aa).

A signal peptide spans 1–19 (MKLHMLNMLNCLLLTVCDG).

As to expression, salivary glands.

Its subcellular location is the secreted. Functionally, anti-inflammatory peptide that may facilitate successful blood feeding of ticks and may lead to immunotolerance in its host. Inhibits the secretion of inflammatory factors in rat splenocytes, such as tumor necrosis factor-alpha (TNF), interleukin-1, interleukin-8 (CXCL8) and interferon-gamma (IFNG). In addition, shows strong free radical scavenging and antioxidant activities in vitro. In vivo, inhibits adjuvant-induced paw inflammation in mouse models. The chain is Anti-inflammatory peptide amregulin from Amblyomma variegatum (Tropical bont tick).